The following is a 198-amino-acid chain: MTLSVGGIDEAGRGPVVGPLVLAIVVGDSEALSKIGVRDSKSLSPRAREVLYGKILEMAVCVNYAVVEPYEIDLHVSRGMLNALEMKYAAKLMELCPADLYYVDSPDVKAARFGDGLSFLTGRRVVSLHKGEAVPQVAAASIVAKVVRDRLVEMLRKEVGDFGSGYPSDRKTREWLRGGRIPHECVRWSWETVGKLFK.

Residues 3-198 (LSVGGIDEAG…SWETVGKLFK (196 aa)) enclose the RNase H type-2 domain. 3 residues coordinate a divalent metal cation: Asp-9, Glu-10, and Asp-104.

It belongs to the RNase HII family. Mn(2+) is required as a cofactor. Requires Mg(2+) as cofactor.

Its subcellular location is the cytoplasm. The catalysed reaction is Endonucleolytic cleavage to 5'-phosphomonoester.. Endonuclease that specifically degrades the RNA of RNA-DNA hybrids. In Pyrobaculum arsenaticum (strain DSM 13514 / JCM 11321 / PZ6), this protein is Ribonuclease HII.